Reading from the N-terminus, the 313-residue chain is Porphobilinogen deaminase (313 aa).

S-(dipyrrolylmethanemethyl)cysteine is present on Cys242.

Belongs to the HMBS family. Monomer. Dipyrromethane is required as a cofactor.

It catalyses the reaction 4 porphobilinogen + H2O = hydroxymethylbilane + 4 NH4(+). Its pathway is porphyrin-containing compound metabolism; protoporphyrin-IX biosynthesis; coproporphyrinogen-III from 5-aminolevulinate: step 2/4. Functionally, tetrapolymerization of the monopyrrole PBG into the hydroxymethylbilane pre-uroporphyrinogen in several discrete steps. This chain is Porphobilinogen deaminase, found in Yersinia pseudotuberculosis serotype O:3 (strain YPIII).